The chain runs to 392 residues: p21-activated protein kinase-interacting protein 1 (392 aa).

WD repeat units follow at residues 33–72, 73–113, 114–155, 156–195, 196–235, and 236–275; these read VADF…MKKK, IEHG…AKKW, ECLK…LVEG, RSAF…LDTA, SISG…CDSL, and VCLC…KMWK. The interval 312–392 is disordered; that stretch reads SLPPAAEPSP…RKKKKIKTMQ (81 aa). S320 is subject to Phosphoserine. Residues 325–345 are compositionally biased toward basic and acidic residues; the sequence is EQSKIGKKEPGDTVHKEEKRS. Positions 381 to 392 are enriched in basic residues; the sequence is KKRKKKKIKTMQ.

As to quaternary structure, interacts with PAK1. Expressed in brain, colon, heart, kidney, liver, lung, muscle, peripheral blood leukocytes, placenta, small intestine, spleen and thymus.

The protein resides in the nucleus. Its subcellular location is the nucleolus. Negatively regulates the PAK1 kinase. PAK1 is a member of the PAK kinase family, which has been shown to play a positive role in the regulation of signaling pathways involving MAPK8 and RELA. PAK1 exists as an inactive homodimer, which is activated by binding of small GTPases such as CDC42 to an N-terminal regulatory domain. PAK1IP1 also binds to the N-terminus of PAK1, and inhibits the specific activation of PAK1 by CDC42. May be involved in ribosomal large subunit assembly. The sequence is that of p21-activated protein kinase-interacting protein 1 (PAK1IP1) from Homo sapiens (Human).